The sequence spans 142 residues: Large ribosomal subunit protein uL11 (142 aa).

The protein belongs to the universal ribosomal protein uL11 family. Part of the ribosomal stalk of the 50S ribosomal subunit. Interacts with L10 and the large rRNA to form the base of the stalk. L10 forms an elongated spine to which L12 dimers bind in a sequential fashion forming a multimeric L10(L12)X complex. In terms of processing, one or more lysine residues are methylated.

In terms of biological role, forms part of the ribosomal stalk which helps the ribosome interact with GTP-bound translation factors. The sequence is that of Large ribosomal subunit protein uL11 from Stenotrophomonas maltophilia (strain R551-3).